A 450-amino-acid polypeptide reads, in one-letter code: NAD-specific glutamate dehydrogenase (450 aa).

Substrate contacts are provided by K90, Q111, and K114. K126 acts as the Proton donor in catalysis. G165 contributes to the substrate binding site. T210 and N241 together coordinate NAD(+). S381 contributes to the substrate binding site.

This sequence belongs to the Glu/Leu/Phe/Val dehydrogenases family. Homohexamer.

The enzyme catalyses L-glutamate + NAD(+) + H2O = 2-oxoglutarate + NH4(+) + NADH + H(+). Its pathway is amino-acid degradation; L-glutamate degradation via hydroxyglutarate pathway; crotonoyl-CoA from L-glutamate: step 1/5. This Clostridium symbiosum (Bacteroides symbiosus) protein is NAD-specific glutamate dehydrogenase (gdh).